A 504-amino-acid polypeptide reads, in one-letter code: Melianol synthase CYP71BQ5 (504 aa).

Residues 2-22 traverse the membrane as a helical segment; sequence EFRLPSLPVFLSFLLFFLMLV. Residue cysteine 442 participates in heme binding.

This sequence belongs to the cytochrome P450 family. Heme serves as cofactor. In terms of tissue distribution, mainly expressed in fruits and leaves.

It is found in the membrane. It carries out the reaction dihydroniloticin + 2 reduced [NADPH--hemoprotein reductase] + 2 O2 = melianol + 2 oxidized [NADPH--hemoprotein reductase] + 3 H2O + 2 H(+). Its pathway is secondary metabolite biosynthesis; terpenoid biosynthesis. In terms of biological role, monooxygenase involved in the biosynthesis of limonoids triterpene natural products such as azadirachtin, an antifeedant widely used as bioinsecticide, and possessing many medicinal applications including anti-tumoral, anti-malarial, anti-rheumatic, antibacterial, anti-inflammatory, anti-pyretic and diuretic effects. Catalyzes the conversion of dihydroniloticin to the protolimonoid melianol. The polypeptide is Melianol synthase CYP71BQ5 (Azadirachta indica (Neem tree)).